Consider the following 609-residue polypeptide: MDNILKASNMEGTSTMTVTSRSSEDSSCISNHEQDTDTHKDGDTSGLENSKISKRKWMKEFFKLSKSPASKSSRSIGSMKSNQSLVSMKSSDDGNSYKNDYSSICGNSLPSAGLSRSNSVKELKLDSTGSQRSKNNVAMLARSSTTSQTTCSSSSSSSSYNSIKGNENDILLQNNNHFRHNKEIPQSKGSSNINTASIMSQYNVDTQATAIMSDMQKQYDSQQMTSPFVNEDLHFDPNGEVSHVIKAIFKEIGYKYDDFSDIPVFQLMQEMYQLVKKNSSARRTKITDYASKLKEKEAQLKSQNDKILKLETTNKAYKTKYKEVSLENKKIKEAFKELDNESYNHDEELLKKYKYTRETLDRVNREQQLIIDQNEFLKKSVNELQNEVNATNFKFSLFKEKYAKLADSITELNTSTKKREALGENLTFECNELKEICLKYKKNIENISNTNKNLQNSFKNERKKVLDLRNERNLLKKEILLIECHGSYSLLLVSNILTCYRFLLPSDTIIETESLIKELLNMNNSLSNHVSSSDEPPAEYSKRLELKCVEFEEKLLYFYQELVTKKIIDVIYKCFINYYKKSRQTDQKSNQNSSTPYKQSQRQVPHSIK.

Disordered regions lie at residues 1–50, 68–96, and 124–165; these read MDNI…LENS, PASKSSRSIGSMKSNQSLVSMKSSDDGNS, and KLDS…SIKG. Polar residues predominate over residues 10–31; the sequence is MEGTSTMTVTSRSSEDSSCISN. Basic and acidic residues predominate over residues 32–43; sequence HEQDTDTHKDGD. Residues 68 to 81 are compositionally biased toward low complexity; sequence PASKSSRSIGSMKS. Composition is skewed to polar residues over residues 82 to 96 and 127 to 136; these read NQSLVSMKSSDDGNS and STGSQRSKNN. Over residues 143–159 the composition is skewed to low complexity; the sequence is SSTTSQTTCSSSSSSSS. 3 coiled-coil regions span residues 283-342, 357-393, and 424-483; these read RTKI…DNES, RETLDRVNREQQLIIDQNEFLKKSVNELQNEVNATNF, and ENLT…LLIE. The tract at residues 586 to 609 is disordered; it reads DQKSNQNSSTPYKQSQRQVPHSIK. Positions 587–609 are enriched in polar residues; it reads QKSNQNSSTPYKQSQRQVPHSIK.

The protein belongs to the MPC70 family. In terms of assembly, interacts directly with MPC54, NUD1 and SPC42. Interacts with ADY3. Interacts with ADY4. Probable component of a SPB complex composed of ADY3, SSP1, DON1, MPC54, SPO21/MPC70, NUD1 and CNM67.

The protein localises to the prospore membrane. Its subcellular location is the cytoplasm. It is found in the cytoskeleton. The protein resides in the spindle pole. In terms of biological role, involved in the pathway that organizes the shaping and sizing of the prospore membrane (PSM) during sporulation. May provide a meiosis-specific scaffold for the assembly of other proteins on spindle pole bodies (SPBs), and may be a limiting component for SPB formation. This chain is Sporulation-specific protein 21 (SPO21), found in Saccharomyces cerevisiae (strain ATCC 204508 / S288c) (Baker's yeast).